The primary structure comprises 142 residues: Hemoglobin subunit alpha-A (142 aa).

The 141-residue stretch at valine 2–arginine 142 folds into the Globin domain. Histidine 59 contributes to the O2 binding site. Histidine 88 serves as a coordination point for heme b.

It belongs to the globin family. In terms of assembly, heterotetramer of two alpha chains and two beta chains. In terms of tissue distribution, red blood cells.

In terms of biological role, involved in oxygen transport from the lung to the various peripheral tissues. The sequence is that of Hemoglobin subunit alpha-A (HBAA) from Anseranas semipalmata (Magpie goose).